The sequence spans 314 residues: MSTDEHLDPIPDSFILQPPVFHPVIPYGTTIFGGLYAGKMVTLQGVVPLHARRFQVDFQCGCCLHPQPDVAFRFSPRFYTVKPHVICNTHQGGLWQKEIRWPGVALQRGDSFLILFLFENEEVKVSVNGQHFLHYRYRLPLSRVDTLDISGDILVKAVGFLNINPFVEGSREYPVGYPFLLYSPRLEVPCSRALPRGLWPGQVIVVRGLVLKEPKDFTLSLKDGTTHVPVTLRASFTDRTLAWVSSWGRKKLISAPFLFHPQRFFEVLLLCQEGGLKLALNGQGLGATSLDQKALEQLRELRISGNVHLYCVHC.

Galectin domains lie at 27–161 (YGTT…VGFL) and 190–314 (CSRA…CVHC).

It is found in the nucleus. Binds lactose. May participate in the apoptosis of adipocytes. In Mus musculus (Mouse), this protein is Galectin-12 (Lgals12).